A 270-amino-acid polypeptide reads, in one-letter code: Acyl-[acyl-carrier-protein]--UDP-N-acetylglucosamine O-acyltransferase (270 aa).

It belongs to the transferase hexapeptide repeat family. LpxA subfamily. As to quaternary structure, homotrimer.

The protein resides in the cytoplasm. It carries out the reaction a (3R)-hydroxyacyl-[ACP] + UDP-N-acetyl-alpha-D-glucosamine = a UDP-3-O-[(3R)-3-hydroxyacyl]-N-acetyl-alpha-D-glucosamine + holo-[ACP]. The protein operates within glycolipid biosynthesis; lipid IV(A) biosynthesis; lipid IV(A) from (3R)-3-hydroxytetradecanoyl-[acyl-carrier-protein] and UDP-N-acetyl-alpha-D-glucosamine: step 1/6. Functionally, involved in the biosynthesis of lipid A, a phosphorylated glycolipid that anchors the lipopolysaccharide to the outer membrane of the cell. This chain is Acyl-[acyl-carrier-protein]--UDP-N-acetylglucosamine O-acyltransferase, found in Helicobacter pylori (strain P12).